A 241-amino-acid polypeptide reads, in one-letter code: Alkylated DNA repair protein ALKBH6 homolog (241 aa).

The region spanning alanine 87–proline 232 is the Fe2OG dioxygenase domain. Residues histidine 105, aspartate 107, and histidine 181 each contribute to the Fe cation site. Residues arginine 223 and arginine 229 each contribute to the 2-oxoglutarate site.

This sequence belongs to the alkB family. Fe(2+) is required as a cofactor.

It is found in the nucleus. Functionally, probable RNA demethylase that binds to both N6-methyladenosine-containing- (m(6)A) and C5-methylcytidine-containing- (m(5)C) RNAs, thus being a probable m(6)A and m(5)C eraser. Involved in responses to abscisic acid (ABA) via the modulation of the expression of ABA signaling-related genes (e.g. ABI3 and ABI4). Acts as a negative regulator during seed germination under abiotic stresses (e.g. salt, cold and ABA). Positive modulator of seedling growth and survival in response to drought and heat, but counteracts tolerance to salt. The sequence is that of Alkylated DNA repair protein ALKBH6 homolog from Arabidopsis thaliana (Mouse-ear cress).